The primary structure comprises 378 residues: Lipoyl synthase, mitochondrial (378 aa).

Cys-109, Cys-114, Cys-120, Cys-140, Cys-144, Cys-147, and Ser-356 together coordinate [4Fe-4S] cluster. One can recognise a Radical SAM core domain in the interval 125–345 (ETGTATATIM…QTLGMEMGFR (221 aa)).

Belongs to the radical SAM superfamily. Lipoyl synthase family. Requires [4Fe-4S] cluster as cofactor.

The protein resides in the mitochondrion. The enzyme catalyses [[Fe-S] cluster scaffold protein carrying a second [4Fe-4S](2+) cluster] + N(6)-octanoyl-L-lysyl-[protein] + 2 oxidized [2Fe-2S]-[ferredoxin] + 2 S-adenosyl-L-methionine + 4 H(+) = [[Fe-S] cluster scaffold protein] + N(6)-[(R)-dihydrolipoyl]-L-lysyl-[protein] + 4 Fe(3+) + 2 hydrogen sulfide + 2 5'-deoxyadenosine + 2 L-methionine + 2 reduced [2Fe-2S]-[ferredoxin]. The protein operates within protein modification; protein lipoylation via endogenous pathway; protein N(6)-(lipoyl)lysine from octanoyl-[acyl-carrier-protein]: step 2/2. Catalyzes the radical-mediated insertion of two sulfur atoms into the C-6 and C-8 positions of the octanoyl moiety bound to the lipoyl domains of lipoate-dependent enzymes, thereby converting the octanoylated domains into lipoylated derivatives. The protein is Lipoyl synthase, mitochondrial of Medicago truncatula (Barrel medic).